The primary structure comprises 302 residues: Tegument protein VP22 (302 aa).

Basic and acidic residues predominate over residues 1–10 (MASSDGDRLC). Disordered regions lie at residues 1-42 (MASS…PDDS) and 125-167 (SFTK…TATS). The tract at residues 154–244 (RPISFSTAPK…ANEADLGEGA (91 aa)) is interaction with gE. Residues 157–167 (SFSTAPKTATS) show a composition bias toward polar residues. A Nuclear export signal motif is present at residues 212–224 (LDRLLTGAVIRIT). Residues 243–302 (GASVSKRGHNRKTGDLQGGMGNEPMYAQVRKPKSRTDTQTTGRITNRSRARSASRTDARK) are disordered.

This sequence belongs to the alphaherpesvirinae VP22 tegument protein family. Interacts with gE (via C-terminus); this interaction is necessary for the recruitment of VP22/ORF9 to the Golgi and its packaging into virions. Interacts with gM (via C-terminus). Interacts with VP16/ORF10; this interaction allows the formation of a tripartite complex composed of VP16/ORF10, VP22/ORF9 and VHS/ORF17. Interacts with the capsid-binding protein ORF44. Interacts with host CGAS. In terms of processing, highly phosphorylated in the host cell. Packaging is selective for underphosphorylated forms.

It localises to the virion tegument. The protein resides in the host cytoplasm. The protein localises to the host nucleus. Its subcellular location is the host Golgi apparatus. Tegument protein that plays different roles during the time course of infection. Participates in both the accumulation of viral mRNAs and viral protein translation at late time of infection. Modulates the RNase activity of the virion host shutoff protein ORF17 probably to ensure necessary levels of key cellular mRNAs and proteins. Plays a role in microtubule reorganization that occurs after viral infection by stabilizing microtubule network. Plays a role in the inhibition of host innate immune system by targeting the CGAS enzymatic activity which is the principal cytosolic DNA sensor that detects invading viral DNA. Acts by mediating disruption of liquid-like droplets in which CGAS is activated, thereby preventing CGAS activity. This is Tegument protein VP22 from Varicella-zoster virus (strain Oka vaccine) (HHV-3).